The primary structure comprises 262 residues: MNVYDIRMAPYWFYEGRGLVQHPYVFRQPVSSRAIIVSTRGDVTGDGVIDEVFLTGNQMPGSPLWRNITLVIRDGRTHQEQRIQLQNNMGYNPSLFLGDMTGDKIEDVAVVMDTGGSGGAIYAYVFAYLNRQFRRIFNSDVLNDELKYSVRYQNQYKASVISHQQNETYILDLTYKGREYLNEIYNSQGVLKMPIEGWVNPLSGLYPVDFDRDGVYELLAYQRIAGRYNADSLGYVQTVLKWNGQRFMFNRQTVTIFGSDLS.

This is an uncharacterized protein from Bacillus subtilis (strain 168).